The chain runs to 172 residues: Signal peptidase complex catalytic subunit SEC11 (172 aa).

The Cytoplasmic segment spans residues 1–14 (MLSSLGNPRQAATQ). The chain crosses the membrane as a helical; Signal-anchor for type II membrane protein span at residues 15–35 (LLNFALILSTAFMMWKGLSVA). Residues 36–172 (TDSPSPIVVV…MGLMVVLQRE (137 aa)) lie on the Lumenal side of the membrane. Catalysis depends on charge relay system residues S49, H90, and D115. A C-terminal short (CTS) helix region spans residues 158-169 (AMLGIMGLMVVL).

The protein belongs to the peptidase S26B family. Component of the signal peptidase complex (SPC) composed of a catalytic subunit SEC11 and three accessory subunits SPC1, SPC2 and SPC3. The complex induces a local thinning of the ER membrane which is used to measure the length of the signal peptide (SP) h-region of protein substrates. This ensures the selectivity of the complex towards h-regions shorter than 18-20 amino acids. SPC associates with the translocon complex.

The protein resides in the endoplasmic reticulum membrane. It catalyses the reaction Cleavage of hydrophobic, N-terminal signal or leader sequences from secreted and periplasmic proteins.. Its function is as follows. Catalytic component of the signal peptidase complex (SPC) which catalyzes the cleavage of N-terminal signal sequences from nascent proteins as they are translocated into the lumen of the endoplasmic reticulum. Specifically cleaves N-terminal signal peptides that contain a hydrophobic alpha-helix (h-region) shorter than 18-20 amino acids. This Pyricularia oryzae (strain 70-15 / ATCC MYA-4617 / FGSC 8958) (Rice blast fungus) protein is Signal peptidase complex catalytic subunit SEC11 (SEC11).